Consider the following 213-residue polypeptide: Thiamine-phosphate synthase (213 aa).

4-amino-2-methyl-5-(diphosphooxymethyl)pyrimidine-binding positions include 40 to 44 (QFREK) and asparagine 75. Mg(2+) is bound by residues aspartate 76 and aspartate 95. Serine 113 contributes to the 4-amino-2-methyl-5-(diphosphooxymethyl)pyrimidine binding site. 139–141 (TPS) is a binding site for 2-[(2R,5Z)-2-carboxy-4-methylthiazol-5(2H)-ylidene]ethyl phosphate. Lysine 142 lines the 4-amino-2-methyl-5-(diphosphooxymethyl)pyrimidine pocket. 2-[(2R,5Z)-2-carboxy-4-methylthiazol-5(2H)-ylidene]ethyl phosphate contacts are provided by residues glycine 171 and 191-192 (IS).

The protein belongs to the thiamine-phosphate synthase family. Requires Mg(2+) as cofactor.

The catalysed reaction is 2-[(2R,5Z)-2-carboxy-4-methylthiazol-5(2H)-ylidene]ethyl phosphate + 4-amino-2-methyl-5-(diphosphooxymethyl)pyrimidine + 2 H(+) = thiamine phosphate + CO2 + diphosphate. The enzyme catalyses 2-(2-carboxy-4-methylthiazol-5-yl)ethyl phosphate + 4-amino-2-methyl-5-(diphosphooxymethyl)pyrimidine + 2 H(+) = thiamine phosphate + CO2 + diphosphate. It carries out the reaction 4-methyl-5-(2-phosphooxyethyl)-thiazole + 4-amino-2-methyl-5-(diphosphooxymethyl)pyrimidine + H(+) = thiamine phosphate + diphosphate. It functions in the pathway cofactor biosynthesis; thiamine diphosphate biosynthesis; thiamine phosphate from 4-amino-2-methyl-5-diphosphomethylpyrimidine and 4-methyl-5-(2-phosphoethyl)-thiazole: step 1/1. Functionally, condenses 4-methyl-5-(beta-hydroxyethyl)thiazole monophosphate (THZ-P) and 2-methyl-4-amino-5-hydroxymethyl pyrimidine pyrophosphate (HMP-PP) to form thiamine monophosphate (TMP). The sequence is that of Thiamine-phosphate synthase from Staphylococcus aureus (strain MRSA252).